A 674-amino-acid polypeptide reads, in one-letter code: YAP1-binding protein 1 (674 aa).

The protein belongs to the YBP1 family. As to quaternary structure, interacts with YAP1. Forms a peroxide stress induced complex with YAP1 in the cytoplasm. Systematic proteome-wide 2-hybrid interaction studies suggest that YAP1, HYR1/GPX3, and YBP1 all interact with the nuclear pore complex subunit NUP116, which is involved in nucleocytoplasmic transport.

The protein localises to the cytoplasm. Its function is as follows. Involved in oxidative stress response and redox homeostasis. Required for hydrogen peroxide-induced oxidation and nuclear localization (activation) of YAP1. Functions probably in concert with HYP1/GPX3, the actual YAP1 modifying enzyme. YBP1 is not required for HYP1/GPX3-independent, diamide-induced oxidation of YAP1. The sequence is that of YAP1-binding protein 1 from Saccharomyces cerevisiae (strain ATCC 204508 / S288c) (Baker's yeast).